The primary structure comprises 312 residues: Taste receptor type 2 member 103 (312 aa).

Topologically, residues 1–6 (MVLTIR) are extracellular. A helical membrane pass occupies residues 7–27 (AILWVTLITIISLEFIIGILG). The Cytoplasmic segment spans residues 28 to 61 (NVFIALVNIIDWVKRGKISAVDKTYMALAISRTA). Residues 62–82 (FLLSLITGFLVSLLDPALLGM) traverse the membrane as a helical segment. At 83–92 (RTMVRLLTIS) the chain is on the extracellular side. The helical transmembrane segment at 93–113 (WMVTNHFSVWFATCLSIFYFL) threads the bilayer. Topologically, residues 114-132 (KIANFSNSIFLVLKWEAKK) are cytoplasmic. Residues 133-153 (VVSVTLVVSVIILIMNIIVIN) form a helical membrane-spanning segment. The Extracellular portion of the chain corresponds to 154-185 (KFTDRLQVNTLQNCSTSNTLKDYGLFLFISTG). The N-linked (GlcNAc...) asparagine glycan is linked to asparagine 166. A helical membrane pass occupies residues 186–206 (FTLTPFAVSLTMFLLLIFSLW). Residues 207 to 229 (RHLKNMCHSATGSRDVSTVAHIK) are Cytoplasmic-facing. The chain crosses the membrane as a helical span at residues 230-250 (GLQTVVTFLLLYTAFVMSLLS). Residues 251–264 (ESLNINIQHTNLLS) lie on the Extracellular side of the membrane. Residues 265–285 (HFLRSIGVAFPTGHSCVLILG) form a helical membrane-spanning segment. Topologically, residues 286-312 (NSKLRQASLSVILWLRYKYKHIENWGP) are cytoplasmic.

This sequence belongs to the G-protein coupled receptor T2R family. Expressed in subsets of taste receptor cells of the tongue and palate epithelium and exclusively in gustducin-positive cells. Expressed in 15% taste bud cells in circumvallate and foliate papillae but only in 2% in fungiform papillae.

The protein resides in the membrane. In terms of biological role, gustducin-coupled receptor implicated in the perception of bitter compounds in the oral cavity and the gastrointestinal tract. Signals through PLCB2 and the calcium-regulated cation channel TRPM5. The polypeptide is Taste receptor type 2 member 103 (Tas2r103) (Mus musculus (Mouse)).